Reading from the N-terminus, the 357-residue chain is Ribosomal RNA large subunit methyltransferase M (357 aa).

S-adenosyl-L-methionine contacts are provided by residues serine 183, 216-219 (APGG), aspartate 235, aspartate 255, and aspartate 271. Lysine 300 functions as the Proton acceptor in the catalytic mechanism.

Belongs to the class I-like SAM-binding methyltransferase superfamily. RNA methyltransferase RlmE family. RlmM subfamily. Monomer.

Its subcellular location is the cytoplasm. It catalyses the reaction cytidine(2498) in 23S rRNA + S-adenosyl-L-methionine = 2'-O-methylcytidine(2498) in 23S rRNA + S-adenosyl-L-homocysteine + H(+). In terms of biological role, catalyzes the 2'-O-methylation at nucleotide C2498 in 23S rRNA. The sequence is that of Ribosomal RNA large subunit methyltransferase M from Pseudomonas fluorescens (strain ATCC BAA-477 / NRRL B-23932 / Pf-5).